A 371-amino-acid chain; its full sequence is Glycosyltransferase 8 domain-containing protein 1 (371 aa).

The Cytoplasmic segment spans residues 1–5; the sequence is MSFRK. Residues 6–26 form a helical; Signal-anchor for type II membrane protein membrane-spanning segment; the sequence is VTIIIWALAVILFLLALHHNF. Residues 27 to 371 lie on the Lumenal side of the membrane; sequence LSLSSLLRND…RRHMDTSNIK (345 aa). N257 carries N-linked (GlcNAc...) asparagine glycosylation.

This sequence belongs to the glycosyltransferase 8 family.

It is found in the membrane. The polypeptide is Glycosyltransferase 8 domain-containing protein 1 (Glt8d1) (Rattus norvegicus (Rat)).